Consider the following 295-residue polypeptide: Sulfotransferase 1 family member D1 (295 aa).

48–53 provides a ligand contact to 3'-phosphoadenylyl sulfate; sequence KSGTTW. Substrate contacts are provided by residues F81 and 106–108; that span reads KTH. H108 (proton acceptor) is an active-site residue. Positions 130 and 138 each coordinate 3'-phosphoadenylyl sulfate. F142 serves as a coordination point for substrate. 3'-phosphoadenylyl sulfate is bound by residues Y193, S227, and 257 to 259; that span reads RKG.

Belongs to the sulfotransferase 1 family.

The protein resides in the cytoplasm. Sulfotransferase with broad substrate specificity that utilizes 3'-phospho-5'-adenylyl sulfate (PAPS) as sulfonate donor to catalyze the sulfate conjugation of catecholamines, such as dopamine, prostaglandins, leukotriene E4, drugs and xenobiotic compounds. Has sulfotransferase activity towards p-nitrophenol, 2-naphthylamine and minoxidil (in vitro). Sulfonation increases the water solubility of most compounds, and therefore their renal excretion, but it can also result in bioactivation to form active metabolites. In Rattus norvegicus (Rat), this protein is Sulfotransferase 1 family member D1 (Sult1d1).